Here is a 460-residue protein sequence, read N- to C-terminus: Histidinol dehydrogenase (460 aa).

Residues Ser269, Gln291, and His294 each contribute to the substrate site. Zn(2+) is bound by residues Gln291 and His294. Residues Glu358 and His359 each act as proton acceptor in the active site. 4 residues coordinate substrate: His359, Asp392, Glu446, and His451. A Zn(2+)-binding site is contributed by Asp392. Position 451 (His451) interacts with Zn(2+).

This sequence belongs to the histidinol dehydrogenase family. Zn(2+) serves as cofactor.

The enzyme catalyses L-histidinol + 2 NAD(+) + H2O = L-histidine + 2 NADH + 3 H(+). The protein operates within amino-acid biosynthesis; L-histidine biosynthesis; L-histidine from 5-phospho-alpha-D-ribose 1-diphosphate: step 9/9. Its function is as follows. Catalyzes the sequential NAD-dependent oxidations of L-histidinol to L-histidinaldehyde and then to L-histidine. In Rhodopirellula baltica (strain DSM 10527 / NCIMB 13988 / SH1), this protein is Histidinol dehydrogenase.